A 230-amino-acid chain; its full sequence is 6-carboxyhexanoate--CoA ligase (230 aa).

This sequence belongs to the BioW family. Homodimer. Mg(2+) serves as cofactor.

It carries out the reaction heptanedioate + ATP + CoA = 6-carboxyhexanoyl-CoA + AMP + diphosphate. The protein operates within metabolic intermediate metabolism; pimeloyl-CoA biosynthesis; pimeloyl-CoA from pimelate: step 1/1. Its function is as follows. Catalyzes the transformation of pimelate into pimeloyl-CoA with concomitant hydrolysis of ATP to AMP. In Staphylococcus aureus (strain Mu3 / ATCC 700698), this protein is 6-carboxyhexanoate--CoA ligase.